We begin with the raw amino-acid sequence, 884 residues long: Telomerase reverse transcriptase (884 aa).

Residues C422–I725 form the Reverse transcriptase domain. 3 residues coordinate Mg(2+): D530, D670, and D671.

The protein belongs to the reverse transcriptase family. Telomerase subfamily. As to quaternary structure, catalytic subunit of the telomerase holoenzyme complex composed minimally of EST2 and the telomerase RNA template component.

The protein resides in the nucleus. It localises to the chromosome. It is found in the telomere. It catalyses the reaction DNA(n) + a 2'-deoxyribonucleoside 5'-triphosphate = DNA(n+1) + diphosphate. Its function is as follows. Telomerase is a ribonucleoprotein enzyme essential for the replication of chromosome termini in most eukaryotes. It elongates telomeres. It is a reverse transcriptase that adds simple sequence repeats to chromosome ends by copying a template sequence within the RNA component of the enzyme. The chain is Telomerase reverse transcriptase (EST2) from Saccharomyces cerevisiae (strain ATCC 204508 / S288c) (Baker's yeast).